The chain runs to 241 residues: Interleukin-6 (241 aa).

The first 26 residues, 1 to 26, serve as a signal peptide directing secretion; the sequence is MNSFTSALRPGPLGCSLALLLVVATA. Residues 32-51 form a disordered region; the sequence is PVREDSNTKASPDKTLTPPG. Disulfide bonds link Cys-72-Cys-78 and Cys-101-Cys-111. N-linked (GlcNAc...) asparagine glycosylation occurs at Asn-108.

The protein belongs to the IL-6 superfamily. As to quaternary structure, component of a hexamer of two molecules each of IL6, IL6R and IL6ST; first binds to IL6R to associate with the signaling subunit IL6ST. Interacts with IL6R (via the N-terminal ectodomain); this interaction may be affected by IL6R-binding with SORL1, hence decreasing IL6 cis signaling. Interacts with SORL1 (via the N-terminal ectodomain); this interaction leads to IL6 internalization and lysosomal degradation. May form a trimeric complex with the soluble SORL1 ectodomain and soluble IL6R receptor; this interaction might stabilize circulating IL6, hence promoting IL6 trans signaling.

The protein resides in the secreted. Functionally, cytokine with a wide variety of biological functions in immunity, tissue regeneration, and metabolism. Binds to IL6R, then the complex associates to the signaling subunit IL6ST/gp130 to trigger the intracellular IL6-signaling pathway. The interaction with the membrane-bound IL6R and IL6ST stimulates 'classic signaling', whereas the binding of IL6 and soluble IL6R to IL6ST stimulates 'trans-signaling'. Alternatively, 'cluster signaling' occurs when membrane-bound IL6:IL6R complexes on transmitter cells activate IL6ST receptors on neighboring receiver cells. In terms of biological role, IL6 is a potent inducer of the acute phase response. Rapid production of IL6 contributes to host defense during infection and tissue injury, but excessive IL6 synthesis is involved in disease pathology. In the innate immune response, is synthesized by myeloid cells, such as macrophages and dendritic cells, upon recognition of pathogens through toll-like receptors (TLRs) at the site of infection or tissue injury. In the adaptive immune response, is required for the differentiation of B cells into immunoglobulin-secreting cells. Plays a major role in the differentiation of CD4(+) T cell subsets. Essential factor for the development of T follicular helper (Tfh) cells that are required for the induction of germinal-center formation. Required to drive naive CD4(+) T cells to the Th17 lineage. Also required for proliferation of myeloma cells and the survival of plasmablast cells. Its function is as follows. Acts as an essential factor in bone homeostasis and on vessels directly or indirectly by induction of VEGF, resulting in increased angiogenesis activity and vascular permeability. Induces, through 'trans-signaling' and synergistically with IL1B and TNF, the production of VEGF. Involved in metabolic controls, is discharged into the bloodstream after muscle contraction increasing lipolysis and improving insulin resistance. 'Trans-signaling' in central nervous system also regulates energy and glucose homeostasis. Mediates, through GLP-1, crosstalk between insulin-sensitive tissues, intestinal L cells and pancreatic islets to adapt to changes in insulin demand. Also acts as a myokine. Plays a protective role during liver injury, being required for maintenance of tissue regeneration. Also has a pivotal role in iron metabolism by regulating HAMP/hepcidin expression upon inflammation or bacterial infection. Through activation of IL6ST-YAP-NOTCH pathway, induces inflammation-induced epithelial regeneration. In Oryctolagus cuniculus (Rabbit), this protein is Interleukin-6 (IL6).